A 552-amino-acid polypeptide reads, in one-letter code: DNA ligase (552 aa).

Glutamate 229 provides a ligand contact to ATP. Catalysis depends on lysine 231, which acts as the N6-AMP-lysine intermediate. ATP contacts are provided by arginine 236 and glutamate 283. Residues glutamate 283 and glutamate 377 each contribute to the Mg(2+) site. Positions 382 and 397 each coordinate ATP.

Belongs to the ATP-dependent DNA ligase family. As to quaternary structure, interacts with host TOP2A and TOP2B. It depends on Mg(2+) as a cofactor.

It localises to the host cytoplasm. It carries out the reaction ATP + (deoxyribonucleotide)n-3'-hydroxyl + 5'-phospho-(deoxyribonucleotide)m = (deoxyribonucleotide)n+m + AMP + diphosphate.. In terms of biological role, DNA ligase that seals nicks in double-stranded DNA during DNA replication, DNA recombination and DNA repair. Recruits cellular topoisomerase II to sites of viral replication and assembly. Contributes to the repair of the viral genome following UV irradiation. This Vaccinia virus (strain Western Reserve) (VACV) protein is DNA ligase (OPG180).